The following is a 195-amino-acid chain: MPTMSRPALDVKGGTSPVKENANPEMNSLAYSNLGVKDRKAVAILHYPGVASNGTKASGAPTSSSGSPSPISSSTATPPTKPPPFNLHPAPHLLASMQLQKLNSQYHGMAAATPGQPGEAEPLPNWGFGAQAGGAGSLSPSAGAQSPAIIDSDPVDEEVLMSLVVELGLDRANELPELWLGQNEFDFTADFPSGS.

Disordered stretches follow at residues 1–24 and 51–149; these read MPTM…NANP and ASNG…SPAI. The span at 54–78 shows a compositional bias: low complexity; that stretch reads GTKASGAPTSSSGSPSPISSSTATP. Polar residues predominate over residues 97–106; that stretch reads MQLQKLNSQY. Residues 137-148 are compositionally biased toward low complexity; it reads SLSPSAGAQSPA. The short motif at 160 to 169 is the Nuclear export signal element; the sequence is LMSLVVELGL.

This sequence belongs to the CITED family. As to quaternary structure, interacts (via C-terminus) with CREBBP. Interacts with EGR2. Homodimer. Binds to RBM14. Interacts (via N-terminus) with HSPA8; the interaction suppresses the association of CITED1 with p300/CBP and SMAD-mediated transcription transactivation. Interacts (via C-terminus) with TOX3 (via HGM box); the interaction increases estrogen-response element (ERE)-dependent transcription and protection against cell death. Interacts with ESR1; the interaction occurs in a estrogen-dependent manner. Interacts (unphosphorylated form preferentially and via C-terminus) with EP300. Phosphorylated. Phosphorylation changes in a cell cycle-dependent manner and reduces its transcriptional cofactor activity.

Its subcellular location is the nucleus. The protein resides in the cytoplasm. Transcriptional coactivator of the p300/CBP-mediated transcription complex. Enhances SMAD-mediated transcription by strengthening the functional link between the DNA-binding SMAD transcription factors and the p300/CBP transcription coactivator complex. Stimulates estrogen-dependent transactivation activity mediated by estrogen receptors signaling; stabilizes the interaction of estrogen receptor ESR1 and histone acetyltransferase EP300. Positively regulates TGF-beta signaling through its association with the SMAD/p300/CBP-mediated transcriptional coactivator complex. Induces transcription from estrogen-responsive promoters and protection against cell death. Potentiates EGR2-mediated transcriptional activation activity from the ERBB2 promoter. Acts as an inhibitor of osteoblastic mineralization through a cAMP-dependent parathyroid hormone receptor signaling. May play a role in pigmentation of melanocytes. Associates with chromatin to the estrogen-responsive TGF-alpha promoter region in a estrogen-dependent manner. This chain is Cbp/p300-interacting transactivator 1 (CITED1), found in Bos taurus (Bovine).